We begin with the raw amino-acid sequence, 57 residues long: Protein GnsB (57 aa).

The protein belongs to the gns family.

Functionally, overexpression increases levels of unsaturated fatty acids and suppresses both the temperature-sensitive fabA6 mutation and cold-sensitive secG null mutation. The protein is Protein GnsB (gnsB) of Escherichia coli (strain K12).